A 347-amino-acid chain; its full sequence is Ceramide very long chain fatty acid hydroxylase scs7 (347 aa).

At 1–156 the chain is on the cytoplasmic side; it reads MASVTSEKCV…GNFLEPLTKT (156 aa). Residues 157-177 traverse the membrane as a helical segment; that stretch reads PWYMIPLIWVPCVTYGFLYAC. Position 178 (Thr178) is a topological domain, lumenal. The helical transmembrane segment at 179 to 199 threads the bilayer; it reads GIPFSVAITFFIIGLFTWTLV. Topologically, residues 200 to 238 are cytoplasmic; it reads EYTMHRFLFHLDEYTPDHPIFLTMHFAFHGCHHFLPADK. Positions 204, 209, 228, 231, and 232 each coordinate Zn(2+). A helical membrane pass occupies residues 239 to 259; it reads YRLVMPPALFLIFATPWYHFI. Position 260 (Gln260) is a topological domain, lumenal. A helical transmembrane segment spans residues 261-281; sequence LVLPHYIGVAGFSGAILGYVF. Topologically, residues 282–347 are cytoplasmic; sequence YDLTHYFLHH…EQGKISTKAK (66 aa). The Zn(2+) site is built by His286, His290, His306, His309, and His310.

The protein belongs to the sterol desaturase family. SCS7 subfamily. Zn(2+) serves as cofactor.

It is found in the endoplasmic reticulum membrane. Its pathway is sphingolipid metabolism. Its function is as follows. Ceramide hydroxylase involved in the hydroxylation of sphingolipid-associated very long chain fatty acids. Postulated to hydroxylate the very long chain fatty acid of dihydroceramides and phytoceramides at C-2. The polypeptide is Ceramide very long chain fatty acid hydroxylase scs7 (Schizosaccharomyces pombe (strain 972 / ATCC 24843) (Fission yeast)).